Reading from the N-terminus, the 541-residue chain is 2-succinyl-5-enolpyruvyl-6-hydroxy-3-cyclohexene-1-carboxylate synthase (541 aa).

It belongs to the TPP enzyme family. MenD subfamily. As to quaternary structure, homodimer. Mg(2+) is required as a cofactor. Mn(2+) serves as cofactor. The cofactor is thiamine diphosphate.

The catalysed reaction is isochorismate + 2-oxoglutarate + H(+) = 5-enolpyruvoyl-6-hydroxy-2-succinyl-cyclohex-3-ene-1-carboxylate + CO2. The protein operates within quinol/quinone metabolism; 1,4-dihydroxy-2-naphthoate biosynthesis; 1,4-dihydroxy-2-naphthoate from chorismate: step 2/7. It participates in quinol/quinone metabolism; menaquinone biosynthesis. Catalyzes the thiamine diphosphate-dependent decarboxylation of 2-oxoglutarate and the subsequent addition of the resulting succinic semialdehyde-thiamine pyrophosphate anion to isochorismate to yield 2-succinyl-5-enolpyruvyl-6-hydroxy-3-cyclohexene-1-carboxylate (SEPHCHC). The sequence is that of 2-succinyl-5-enolpyruvyl-6-hydroxy-3-cyclohexene-1-carboxylate synthase from Rhodococcus opacus (strain B4).